A 352-amino-acid chain; its full sequence is MIAIGLEGSANKIGIGVISHPGPNKTPIILSNLRHTYISPPGEGFLPKDTAIHHRAWVVRLIKQAVQQAGVKIEDIECICYTKGPGMGAPLQSVALAARTISLLWGKPVVGVNHCVGHIEMGRAITKADNPVVLYVSGGNTQVIAYSAQRYRIFGETLDIAIGNCIDRFARTLMIPNNPFPGYNVEQLAKKGKNLVDLPYGVKGMDASFSGILAAADLLAKGLDESLPLEKRLKTEEGELVTREDLCFSLQETIYAMLVEITERAMAHVGSQQVLVVGGVGSNERLQQMMGMMARDRGGSVFATDERFCIDNGIMIAHAGLLEYCTGVVTKMEDTTCTQRFRTDEVFVGWRD.

Residues His114, His118, and Tyr135 each contribute to the a divalent metal cation site. Substrate-binding positions include 135 to 139 (YVSGG), Asp167, Gly182, Glu186, and Asn283. Asp311 is a binding site for a divalent metal cation.

Belongs to the KAE1 / TsaD family. Component of the EKC/KEOPS complex composed of at least BUD32, CGI121, GON7, KAE1 and PCC1; the whole complex dimerizes. A divalent metal cation serves as cofactor.

It localises to the cytoplasm. The protein resides in the nucleus. The enzyme catalyses L-threonylcarbamoyladenylate + adenosine(37) in tRNA = N(6)-L-threonylcarbamoyladenosine(37) in tRNA + AMP + H(+). Functionally, component of the EKC/KEOPS complex that is required for the formation of a threonylcarbamoyl group on adenosine at position 37 (t(6)A37) in tRNAs that read codons beginning with adenine. The complex is probably involved in the transfer of the threonylcarbamoyl moiety of threonylcarbamoyl-AMP (TC-AMP) to the N6 group of A37. KAE1 likely plays a direct catalytic role in this reaction, but requires other protein(s) of the complex to fulfill this activity. The EKC/KEOPS complex also promotes both telomere uncapping and telomere elongation. The complex is required for efficient recruitment of transcriptional coactivators. The sequence is that of tRNA N6-adenosine threonylcarbamoyltransferase from Phaeosphaeria nodorum (strain SN15 / ATCC MYA-4574 / FGSC 10173) (Glume blotch fungus).